The sequence spans 264 residues: Transmembrane protein 41A (264 aa).

Residues 1–17 form the signal peptide; sequence MRALLGLLLVFGGCTFA. 5 helical membrane-spanning segments follow: residues 67-87, 100-122, 153-173, 175-195, and 219-239; these read AYVF…AIPG, GPWL…CYLL, LFFF…FLNL, APIL…GLIP, and WETV…GTLI. The segment at 96–207 is VTT domain; the sequence is GALFGPWLGL…FICVQTGSIL (112 aa).

It belongs to the TMEM41 family.

The protein localises to the membrane. The polypeptide is Transmembrane protein 41A (Tmem41a) (Mus musculus (Mouse)).